A 246-amino-acid chain; its full sequence is tRNA (guanine-N(1)-)-methyltransferase (246 aa).

S-adenosyl-L-methionine contacts are provided by residues Gly114 and 133–138 (LGDYVL).

Belongs to the RNA methyltransferase TrmD family. In terms of assembly, homodimer.

It is found in the cytoplasm. It carries out the reaction guanosine(37) in tRNA + S-adenosyl-L-methionine = N(1)-methylguanosine(37) in tRNA + S-adenosyl-L-homocysteine + H(+). In terms of biological role, specifically methylates guanosine-37 in various tRNAs. This chain is tRNA (guanine-N(1)-)-methyltransferase, found in Enterococcus faecalis (strain ATCC 700802 / V583).